The sequence spans 326 residues: Malate dehydrogenase (326 aa).

12 to 18 (GGTGQIA) contacts NAD(+). Residues arginine 93 and arginine 99 each contribute to the substrate site. NAD(+) is bound by residues asparagine 106, glutamine 113, and 130–132 (VGN). Residues asparagine 132 and arginine 163 each coordinate substrate. Histidine 188 serves as the catalytic Proton acceptor.

Belongs to the LDH/MDH superfamily. MDH type 2 family.

The catalysed reaction is (S)-malate + NAD(+) = oxaloacetate + NADH + H(+). Its function is as follows. Catalyzes the reversible oxidation of malate to oxaloacetate. The polypeptide is Malate dehydrogenase (Chlamydia trachomatis serovar L2 (strain ATCC VR-902B / DSM 19102 / 434/Bu)).